Reading from the N-terminus, the 599-residue chain is Adenine deaminase (599 aa).

It belongs to the metallo-dependent hydrolases superfamily. Adenine deaminase family. It depends on Mn(2+) as a cofactor.

It catalyses the reaction adenine + H2O + H(+) = hypoxanthine + NH4(+). This chain is Adenine deaminase, found in Clostridium botulinum (strain Loch Maree / Type A3).